Consider the following 445-residue polypeptide: Reticulon-4 receptor-like 1 (445 aa).

The signal sequence occupies residues 1–24 (MLRKGCCVELLLLLLAGELPLSGG). One can recognise an LRRNT domain in the interval 25–54 (CPRDCVCYPSPMTVSCQAHNFAAIPEGIPE). LRR repeat units lie at residues 55–76 (DSER…HFSP), 77–98 (AMVT…TFEG), 101–123 (HLEE…TFQG), 126–147 (KLHA…IFGG), 150–171 (SLQY…IFVD), 174–195 (NLSH…IFRG), 198–219 (NLDR…AFHD), and 222–243 (RLTT…CLAP). Positions 255-306 (NAWDCGCRARSLWEWLRRFRGSSSVVPCATPELRQGQDLKSLRVEDFRNCTG) constitute an LRRCT domain. Disordered stretches follow at residues 304-380 (CTGP…ELPE) and 401-421 (RPKR…SGVQ). 2 stretches are compositionally biased toward basic residues: residues 352–366 (GSKK…HRNR) and 401–413 (RPKR…RRTP). A lipid anchor (GPI-anchor amidated serine) is attached at Ser-424. The helical transmembrane segment at 424–444 (SSGTALGVSLLAWILGLVVSL) threads the bilayer. A propeptide spans 425–445 (SGTALGVSLLAWILGLVVSLR) (removed in mature form).

This sequence belongs to the Nogo receptor family. Identified in a complex that contains RTN4R, RTN4RL1 and NGFR; the interaction depends on the presence of chondroitin sulfate proteoglycans. Does not interact with MAG, OMG and RTN4. As to expression, detected in brain (at protein level). Expressed in various regions of the brain, including the cerebral cortex, hippocampus, striatum, thalamus and cerebellum.

The protein resides in the cell membrane. Its subcellular location is the membrane raft. It localises to the perikaryon. It is found in the cell projection. Its function is as follows. Cell surface receptor. Plays a functionally redundant role in postnatal brain development and in regulating axon regeneration in the adult central nervous system. Contributes to normal axon migration across the brain midline and normal formation of the corpus callosum. Protects motoneurons against apoptosis; protection against apoptosis is probably mediated by MAG. Plays a role in inhibiting neurite outgrowth and axon regeneration via its binding to neuronal chondroitin sulfate proteoglycans. Binds heparin. Like other family members, plays a role in restricting the number dendritic spines and the number of synapses that are formed during brain development. Signaling mediates activation of Rho and downstream reorganization of the actin cytoskeleton. The sequence is that of Reticulon-4 receptor-like 1 from Rattus norvegicus (Rat).